The primary structure comprises 355 residues: uncharacterized protein (355 aa).

Position 132-139 (132-139 (GPPGCGKT)) interacts with ATP.

It belongs to the AAA ATPase family.

It localises to the mitochondrion. This is an uncharacterized protein from Schizosaccharomyces pombe (strain 972 / ATCC 24843) (Fission yeast).